Here is a 142-residue protein sequence, read N- to C-terminus: Alpha-lactalbumin (142 aa).

The first 19 residues, 1–19 (MRFFVPLFLVGILFPAILA), serve as a signal peptide directing secretion. The C-type lysozyme domain maps to 20-142 (KQFTKCELSQ…KLEQWLCEKL (123 aa)). Cystine bridges form between Cys-25-Cys-139, Cys-47-Cys-130, Cys-80-Cys-96, and Cys-92-Cys-110. Ca(2+)-binding residues include Thr-57 and Gln-58. The N-linked (GlcNAc...) asparagine glycan is linked to Asn-64. Glu-68 lines the Zn(2+) pocket. N-linked (GlcNAc...) asparagine; atypical; partial glycosylation occurs at Asn-90. 7 residues coordinate Ca(2+): Lys-98, Leu-100, Asp-101, Asp-102, Asp-103, Asp-106, and Asp-107. Glu-135 provides a ligand contact to Zn(2+).

This sequence belongs to the glycosyl hydrolase 22 family. As to quaternary structure, lactose synthase (LS) is a heterodimer of a catalytic component, beta1,4-galactosyltransferase (beta4Gal-T1) and a regulatory component, alpha-lactalbumin (LA). Mammary gland specific. Secreted in milk.

The protein localises to the secreted. Functionally, regulatory subunit of lactose synthase, changes the substrate specificity of galactosyltransferase in the mammary gland making glucose a good acceptor substrate for this enzyme. This enables LS to synthesize lactose, the major carbohydrate component of milk. In other tissues, galactosyltransferase transfers galactose onto the N-acetylglucosamine of the oligosaccharide chains in glycoproteins. The polypeptide is Alpha-lactalbumin (LALBA) (Homo sapiens (Human)).